The sequence spans 437 residues: Acyl-coenzyme A thioesterase 9, mitochondrial (437 aa).

The N-terminal 21 residues, 1–21 (MRRAALRLCTLSKGLLAPSRG), are a transit peptide targeting the mitochondrion. HotDog ACOT-type domains are found at residues 84-207 (SYIE…RDSE) and 287-399 (ENSK…EKEV). The residue at position 101 (Lys-101) is an N6-acetyllysine.

It belongs to the acyl coenzyme A hydrolase family. As to quaternary structure, interacts with NYAP1, NYAP2 and MYO16.

The protein resides in the mitochondrion. It localises to the mitochondrion matrix. It is found in the mitochondrion inner membrane. The catalysed reaction is butanoyl-CoA + H2O = butanoate + CoA + H(+). It carries out the reaction propanoyl-CoA + H2O = propanoate + CoA + H(+). It catalyses the reaction hexadecanoyl-CoA + H2O = hexadecanoate + CoA + H(+). The enzyme catalyses octanoyl-CoA + H2O = octanoate + CoA + H(+). The catalysed reaction is decanoyl-CoA + H2O = decanoate + CoA + H(+). It carries out the reaction tetradecanoyl-CoA + H2O = tetradecanoate + CoA + H(+). It catalyses the reaction 4,8-dimethylnonanoyl-CoA + H2O = 4,8-dimethylnonanoate + CoA + H(+). The enzyme catalyses 3-methylbutanoyl-CoA + H2O = 3-methylbutanoate + CoA + H(+). The catalysed reaction is 2-methylpropanoyl-CoA + H2O = 2-methylpropanoate + CoA + H(+). The protein operates within lipid metabolism; fatty acid metabolism. With respect to regulation, strongly inhibited by NADH and CoA. Its function is as follows. Mitochondrial acyl-CoA thioesterase. Catalyzes the hydrolysis of acyl-CoAs into free fatty acids and coenzyme A (CoA), regulating their respective intracellular levels. Regulates both mitochondrial lipid and amino acid metabolism. This chain is Acyl-coenzyme A thioesterase 9, mitochondrial (ACOT9), found in Bos taurus (Bovine).